The chain runs to 517 residues: MTCPDKPGQLVNWFVCSLCAPRVCKLWSSRRPRTRRNLLLGTACAIYLGFLVSQVGRGSFQHGQATDRGPPNGHDIFKVPFSEIPLDGTLAPPELQGNGSTLQPNVVYITLRSKRSKPANIRGTVKPKRRKKYAVASAAPDQEVLVRPSLIQQEAARAADAEVPGYVQGYLTKVGERPWRVLRGPGVRTRGSNLQQPRARESNIRIYSESAPSWLSKEDIRRMRLLADSEVASILPISKSGTRLLVLEGSTSGSVPGCGPSPCGLLKQPLDMSEVFAFHLDRILGLNRTLPSVSRKLEFIQDGRPRPIILWDSSLASASNDSHSSVKITWGTYQRLLKQKCWLNGRVPRPEWDCTEIHHHEWSKMALFDFLLQIYNRLDTNCCGFRPRKEDACIQNGLRSNCEDQTSVTLAHIIQRKNDPRHLVFINNKGFFDRSEDNLNFKLLEGIREFPESAVSVLKSQHLRQKLLQSLFLDQVYWESQGGRQGIEKLIDVIERRARILITYINAHGARVLPMNE.

Topologically, residues 1–36 (MTCPDKPGQLVNWFVCSLCAPRVCKLWSSRRPRTRR) are cytoplasmic. The chain crosses the membrane as a helical; Signal-anchor for type II membrane protein span at residues 37-56 (NLLLGTACAIYLGFLVSQVG). Topologically, residues 57 to 517 (RGSFQHGQAT…HGARVLPMNE (461 aa)) are extracellular. N-linked (GlcNAc...) asparagine glycans are attached at residues Asn98 and Asn287.

Belongs to the GASK family.

It is found in the golgi apparatus membrane. This chain is Golgi-associated kinase 1B, found in Mus musculus (Mouse).